Here is a 62-residue protein sequence, read N- to C-terminus: uncharacterized protein (62 aa).

This is an uncharacterized protein from Acidianus filamentous virus 2 (isolate Italy/Pozzuoli) (AFV-2).